Consider the following 722-residue polypeptide: Host cell factor 2 (722 aa).

Kelch repeat units lie at residues 34–79, 83–130, 207–255, and 257–303; these read LMII…GFVC, RILV…RLGH, KMYV…VIGN, and MYIF…VSDS. Fibronectin type-III domains are found at residues 359–460, 514–604, and 606–716; these read APSQ…VDSS, TPSN…TCTP, and FPGA…DQEK. Residues 398 to 476 form a disordered region; the sequence is ATSSDSSAAP…LAPNTSNNSS (79 aa). The span at 419-436 shows a compositional bias: polar residues; sequence QGSNSTLHNSVSDTVNST.

In terms of assembly, binds KMT2A/MLL1. Component of the MLL1/MLL complex, at least composed of KMT2A/MLL1, ASH2L, RBBP5, DPY30, WDR5, MEN1, HCFC1 and HCFC2. Interacts with TASOR. As to expression, expressed in the spermatogonia, spermatocytes and ovary.

The protein resides in the cytoplasm. Its subcellular location is the nucleus. The chain is Host cell factor 2 (Hcfc2) from Mus musculus (Mouse).